We begin with the raw amino-acid sequence, 174 residues long: uncharacterized protein (174 aa).

The next 2 helical transmembrane spans lie at 29-51 and 66-83; these read FAVE…GFWY and VIVI…VTKI.

It localises to the cell membrane. This is an uncharacterized protein from Bacillus subtilis (strain 168).